Here is a 503-residue protein sequence, read N- to C-terminus: ATP synthase subunit alpha (503 aa).

169–176 (GDRQTGKT) serves as a coordination point for ATP.

This sequence belongs to the ATPase alpha/beta chains family. F-type ATPases have 2 components, CF(1) - the catalytic core - and CF(0) - the membrane proton channel. CF(1) has five subunits: alpha(3), beta(3), gamma(1), delta(1), epsilon(1). CF(0) has three main subunits: a(1), b(2) and c(9-12). The alpha and beta chains form an alternating ring which encloses part of the gamma chain. CF(1) is attached to CF(0) by a central stalk formed by the gamma and epsilon chains, while a peripheral stalk is formed by the delta and b chains.

Its subcellular location is the cell membrane. It carries out the reaction ATP + H2O + 4 H(+)(in) = ADP + phosphate + 5 H(+)(out). Its function is as follows. Produces ATP from ADP in the presence of a proton gradient across the membrane. The alpha chain is a regulatory subunit. The chain is ATP synthase subunit alpha from Macrococcus caseolyticus (strain JCSC5402) (Macrococcoides caseolyticum).